The primary structure comprises 698 residues: Elongation factor G 1 (698 aa).

The tr-type G domain maps to 8-290 (ERYRNIGICA…AVIEFLPSPT (283 aa)). Residues 17-24 (AHVDAGKT), 88-92 (DTPGH), and 142-145 (NKMD) contribute to the GTP site.

Belongs to the TRAFAC class translation factor GTPase superfamily. Classic translation factor GTPase family. EF-G/EF-2 subfamily.

The protein localises to the cytoplasm. Catalyzes the GTP-dependent ribosomal translocation step during translation elongation. During this step, the ribosome changes from the pre-translocational (PRE) to the post-translocational (POST) state as the newly formed A-site-bound peptidyl-tRNA and P-site-bound deacylated tRNA move to the P and E sites, respectively. Catalyzes the coordinated movement of the two tRNA molecules, the mRNA and conformational changes in the ribosome. In Vibrio cholerae serotype O1 (strain ATCC 39315 / El Tor Inaba N16961), this protein is Elongation factor G 1.